The sequence spans 298 residues: Phosphatidylglycerol--prolipoprotein diacylglyceryl transferase (298 aa).

7 helical membrane passes run 17–37, 59–79, 97–117, 129–149, 204–224, 230–250, and 257–277; these read LAVR…IVVG, MMFY…VLFY, GGMS…LFAW, FVAP…FING, SQLY…FLFA, MGAI…TVEF, and FLGL…PMIL. Residue arginine 142 participates in a 1,2-diacyl-sn-glycero-3-phospho-(1'-sn-glycerol) binding.

It belongs to the Lgt family.

It localises to the cell inner membrane. The enzyme catalyses L-cysteinyl-[prolipoprotein] + a 1,2-diacyl-sn-glycero-3-phospho-(1'-sn-glycerol) = an S-1,2-diacyl-sn-glyceryl-L-cysteinyl-[prolipoprotein] + sn-glycerol 1-phosphate + H(+). It functions in the pathway protein modification; lipoprotein biosynthesis (diacylglyceryl transfer). Functionally, catalyzes the transfer of the diacylglyceryl group from phosphatidylglycerol to the sulfhydryl group of the N-terminal cysteine of a prolipoprotein, the first step in the formation of mature lipoproteins. In Burkholderia orbicola (strain MC0-3), this protein is Phosphatidylglycerol--prolipoprotein diacylglyceryl transferase.